Consider the following 517-residue polypeptide: Putative alpha-L-fucosidase 1 (517 aa).

The N-terminal stretch at 1–20 (MATILLLLLGLLVGLPLLRA) is a signal peptide. 7 N-linked (GlcNAc...) asparagine glycosylation sites follow: Asn119, Asn249, Asn296, Asn321, Asn352, Asn496, and Asn511.

Belongs to the glycosyl hydrolase 29 family.

The protein resides in the secreted. It is found in the extracellular space. It localises to the apoplast. The enzyme catalyses an alpha-L-fucoside + H2O = L-fucose + an alcohol. Functionally, alpha-L-fucosidase is responsible for hydrolyzing the alpha-1,6-linked fucose joined to the reducing-end N-acetylglucosamine of the carbohydrate moieties of glycoproteins. Active only against 2'-fucosyl-lactitol when heterologously expressed. The polypeptide is Putative alpha-L-fucosidase 1 (Oryza sativa subsp. japonica (Rice)).